Here is a 562-residue protein sequence, read N- to C-terminus: MSQSKYRQLDVRAPRGTTLTAKSWLTEAPLRMLMNNLDPDVAENPHELVVYGGIGRAARNWECYDAIVKALKNLESDETLLVQSGKPVGVFKTHENSPRVLIANSNLVPHWATWEHFNELDAKGLAMYGQMTAGSWIYIGSQGIVQGTYETFVEAGRQHYQGSLKGRWVLTAGLGGMGGAQPLAATLAGACSLNIECQQSRIDFRLRTRYVDEQATSLDDALARIKKYTAEGRAISIALCGNAAEIVPELVKRGVRPDMVTDQTSAHDPLHGYLPKGWSWEEYQQKAESDPQGTILAAKRSMADHVQAMLAFHEMGVPTFDYGNNIRQMAQEVGVSNAFDFPGFVPAYIRPLFCRGIGPFRWVALSGDPQDIYKTDAKVKEIIKDDQHLHHWLDMARERISFQGLPARICWVGLEWRQKLGLAFNEMVRSGEVSAPIVIGRDHLDSGSVASPNRETEAMRDGSDAVSDWPLLNALLNTASGATWVSLHHGGGVGMGFSQHSGMVIVCDGTDEAAARIARVLRNDPATGVMRHADAGYEIAIECAAEQGLNLPMVAATQGNAK.

Residues 52–53, glutamine 130, 176–178, glutamate 196, arginine 201, 242–243, 263–267, 273–274, and tyrosine 322 contribute to the NAD(+) site; these read GG, GMG, NA, QTSAH, and YL. Cysteine 410 is a catalytic residue. Glycine 492 is a binding site for NAD(+).

It belongs to the urocanase family. NAD(+) serves as cofactor.

It localises to the cytoplasm. The enzyme catalyses 4-imidazolone-5-propanoate = trans-urocanate + H2O. It functions in the pathway amino-acid degradation; L-histidine degradation into L-glutamate; N-formimidoyl-L-glutamate from L-histidine: step 2/3. Its function is as follows. Catalyzes the conversion of urocanate to 4-imidazolone-5-propionate. In Klebsiella pneumoniae subsp. pneumoniae (strain ATCC 700721 / MGH 78578), this protein is Urocanate hydratase.